The following is an 833-amino-acid chain: Serine/threonine-protein phosphatase 4 regulatory subunit 3A (833 aa).

The 100-residue stretch at 1-100 folds into the WH1 domain; sequence MTDTRRRVKV…DEIWEKICQV (100 aa). Serine 117 and serine 127 each carry phosphoserine. Lysine 655 is modified (N6-acetyllysine). Residues 683–694 are compositionally biased toward acidic residues; it reads FNTDEDDMEDGE. 2 disordered regions span residues 683 to 712 and 733 to 833; these read FNTD…IMDP and KTNL…KFDS. Residues serine 698, serine 741, serine 768, serine 771, serine 774, serine 777, and serine 780 each carry the phosphoserine modification. Positions 734–751 are enriched in polar residues; sequence TNLSGRQSPSFKLSLSSG. Residues 752-768 show a composition bias toward low complexity; that stretch reads TKTNLTSQSSTTNLPGS. The segment covering 785–794 has biased composition (polar residues); it reads PKNTSQTAAI. The segment covering 806–820 has biased composition (acidic residues); that stretch reads YPDDDEDDDEDEDKE.

Belongs to the SMEK family. Serine/threonine-protein phosphatase 4 (PP4) occurs in different assemblies of the catalytic and one or more regulatory subunits. Component of the PP4 complex PPP4C-PPP4R2-PPP4R3A. Interacts with PPP4C; the interaction requires PPP4R2.

It localises to the cytoplasm. The protein resides in the cytoskeleton. It is found in the microtubule organizing center. Its subcellular location is the centrosome. The protein localises to the nucleus. Regulatory subunit of serine/threonine-protein phosphatase 4. May regulate the activity of PPP4C at centrosomal microtubule organizing centers. The PPP4C-PPP4R2-PPP4R3A PP4 complex specifically dephosphorylates H2AX phosphorylated on 'Ser-140' (gamma-H2AX) generated during DNA replication and required for DNA DSB repair. The protein is Serine/threonine-protein phosphatase 4 regulatory subunit 3A of Homo sapiens (Human).